The chain runs to 512 residues: Putative ribose/galactose/methyl galactoside import ATP-binding protein 2 (512 aa).

2 consecutive ABC transporter domains span residues 14–251 (IALT…VGRQ) and 262–507 (TSGN…TQRE). Residue 46 to 53 (GENGAGKS) coordinates ATP.

Belongs to the ABC transporter superfamily. Carbohydrate importer 2 (CUT2) (TC 3.A.1.2) family.

Its subcellular location is the cell inner membrane. It catalyses the reaction D-ribose(out) + ATP + H2O = D-ribose(in) + ADP + phosphate + H(+). The enzyme catalyses D-galactose(out) + ATP + H2O = D-galactose(in) + ADP + phosphate + H(+). In terms of biological role, part of an ABC transporter complex involved in carbohydrate import. Could be involved in ribose, galactose and/or methyl galactoside import. Responsible for energy coupling to the transport system. The polypeptide is Putative ribose/galactose/methyl galactoside import ATP-binding protein 2 (Burkholderia cenocepacia (strain HI2424)).